The chain runs to 134 residues: MGKDTIADIITYIRNADMNKKGMVQIPFTNITENIVKILLREGFVENVRKHRENDKYFLVLTLRYRRNRKGSYKSFLNLKRISTPGLRIYSNYQRIPRILGGMGIVILSTSRGIMTDREARLERIGGEVLCYIW.

It belongs to the universal ribosomal protein uS8 family. Part of the 30S ribosomal subunit.

The protein localises to the plastid. It is found in the chloroplast. Its function is as follows. One of the primary rRNA binding proteins, it binds directly to 16S rRNA central domain where it helps coordinate assembly of the platform of the 30S subunit. This Glycine max (Soybean) protein is Small ribosomal subunit protein uS8c (rps8).